The chain runs to 207 residues: Cyclic di-AMP synthase CdaS (207 aa).

Residues 13–37 (AFKGKIQVYLEQILGDASLILKTLH) adopt a coiled-coil conformation. The region spanning 63 to 205 (SFYLQSYIEE…DGVLYPLISP (143 aa)) is the DAC domain.

This sequence belongs to the adenylate cyclase family. DacB/CdaS subfamily. In terms of assembly, forms dimers and probably also hexamers; the dimer may be active while the hexamer may not be active.

It catalyses the reaction 2 ATP = 3',3'-c-di-AMP + 2 diphosphate. Functionally, one of 3 paralogous diadenylate cyclases (DAC) in this bacteria, catalyzing the condensation of 2 ATP molecules into cyclic di-AMP (c-di-AMP). Upon expression in E.coli leads to c-di-AMP synthesis. Overexpression of the hyperactive mutant (L44F) in the absence of c-di-AMP phosphodiesterase GdpP leads to growth defects in log phase (long curly cell filaments) that disappear upon sporulation; spore formation is normal, showing sporulation is insensitive to the excess c-di-AMP. In B.subtilis c-di-AMP is a second messenger that mediates growth, DNA repair and cell wall homeostasis; it is toxic when present in excess. The chain is Cyclic di-AMP synthase CdaS from Bacillus subtilis (strain 168).